The following is a 652-amino-acid chain: MSEKIHPVTKPVKARALIDQAKYQKWYRQSVEDPDKFWGKHGQRIDWFKPYTKVKNTSFTGKVSIKWFEDGLTNVSYNCIDRHLKKHGDRVAFIWEGDNPYIDKKVTYNELYEHVCRLANVLKKHGVKKGDRVTIYMPMIPEAAYAMLACARIGAVHSVVFGGFSPEALGGRIVDCQSTFVITCDEGLRGGKPIPLKENTDTAIHIAAKQFVTVEKVLVVRRTGGKTGWAPGRDLWYHEETAKVKADCPPVKMKAEDPLFILYTSGSTGKPKGVLHTTGGYLVYAAMTHEYTFDYHPGDIYWCTADVGWVTGHSYIVYGPLANAATSLMFEGVPNYPDQGRFWDIIDKHKVNIFYTAPTAIRSLMGAGDHFVKRSSRSSLRLLGTVGEPINPEAWEWYYKVVGDSRSPIVDTWWQTETGGHMITPLPGATDLKPGSATLPFFGVQPELVDSEGKVLEGAADGNLVIADSWPGQMRTVYGDHERFIQTYFSTYKGKYFTGDGCRRDEDGYYWITGRVDDVLNVSGHRLGTAEVESALVSHKHVSEAAVVGYPHSIKGQGIYCYVTLMVGQEGSDALRQELVKHVRAEIGPIASPDKIQFTPGLPKTRSGKIMRRILRKIAEDDFGALGDTSTLADPAVVDDLIANRQNKADAA.

Residues Arg189 to Lys192, Thr311, and Asn335 contribute to the CoA site. ATP is bound by residues Gly387–Pro389, Asp411–Thr416, Asp500, and Arg515. Position 523 (Ser523) interacts with CoA. Arg526 is an ATP binding site. Positions 537, 539, and 542 each coordinate Mg(2+). CoA is bound at residue Arg584. Lys609 carries the post-translational modification N6-acetyllysine.

Belongs to the ATP-dependent AMP-binding enzyme family. Mg(2+) serves as cofactor. In terms of processing, acetylated. Deacetylation by the SIR2-homolog deacetylase activates the enzyme.

The catalysed reaction is acetate + ATP + CoA = acetyl-CoA + AMP + diphosphate. Its function is as follows. Catalyzes the conversion of acetate into acetyl-CoA (AcCoA), an essential intermediate at the junction of anabolic and catabolic pathways. AcsA undergoes a two-step reaction. In the first half reaction, AcsA combines acetate with ATP to form acetyl-adenylate (AcAMP) intermediate. In the second half reaction, it can then transfer the acetyl group from AcAMP to the sulfhydryl group of CoA, forming the product AcCoA. The polypeptide is Acetyl-coenzyme A synthetase (Rhizobium rhizogenes (strain K84 / ATCC BAA-868) (Agrobacterium radiobacter)).